Here is a 218-residue protein sequence, read N- to C-terminus: Attacin-B (218 aa).

The signal sequence occupies residues 1–17; the sequence is MQKTSILILALFAIAEA. The propeptide occupies 18–28; that stretch reads VPTTGPIRVRR.

Belongs to the attacin/sarcotoxin-2 family. As to expression, hemolymph (at protein level).

It is found in the secreted. Functionally, hemolymph antibacterial protein. This chain is Attacin-B (AttB), found in Drosophila melanogaster (Fruit fly).